The primary structure comprises 199 residues: Protein-methionine-sulfoxide reductase heme-binding subunit MsrQ (199 aa).

4 consecutive transmembrane segments (helical) span residues 10 to 30 (WLKV…FWAI), 82 to 102 (LWCF…ELGI), 116 to 136 (PYLT…LTST), and 153 to 173 (VVYL…KILS).

This sequence belongs to the MsrQ family. In terms of assembly, heterodimer of a catalytic subunit (MsrP) and a heme-binding subunit (MsrQ). Requires FMN as cofactor. The cofactor is heme b.

It localises to the cell inner membrane. Part of the MsrPQ system that repairs oxidized periplasmic proteins containing methionine sulfoxide residues (Met-O), using respiratory chain electrons. Thus protects these proteins from oxidative-stress damage caused by reactive species of oxygen and chlorine generated by the host defense mechanisms. MsrPQ is essential for the maintenance of envelope integrity under bleach stress, rescuing a wide series of structurally unrelated periplasmic proteins from methionine oxidation, including the primary periplasmic chaperone SurA and the lipoprotein Pal. MsrQ provides electrons for reduction to the reductase catalytic subunit MsrP, using the quinone pool of the respiratory chain. The sequence is that of Protein-methionine-sulfoxide reductase heme-binding subunit MsrQ from Salmonella agona (strain SL483).